Consider the following 350-residue polypeptide: Protein MGF 360-12L (350 aa).

Residues 57–89 (DLNTALVKAVRENNYNLIKLFAEWGANINYGLV) form an ANK repeat.

It belongs to the asfivirus MGF 360 family.

Functionally, plays a role in virus cell tropism, and may be required for efficient virus replication in macrophages. The polypeptide is Protein MGF 360-12L (African swine fever virus (isolate Warthog/Namibia/Wart80/1980) (ASFV)).